A 450-amino-acid polypeptide reads, in one-letter code: Folate synthesis bifunctional protein (450 aa).

An HPPK region spans residues 1–166 (MTSWNFVCLS…TFAELAAIYP (166 aa)). The Pterin-binding domain occupies 180 to 441 (TQIMGIVNIT…QVEGNRRALA (262 aa)). Positions 182–450 (IMGIVNITDN…AAAAWAGMFV (269 aa)) are DHPS. A Mg(2+)-binding site is contributed by N187. (7,8-dihydropterin-6-yl)methyl diphosphate contacts are provided by residues T227, D267, N287, D358, K395, and 429–431 (RVH).

In the C-terminal section; belongs to the DHPS family. The protein in the N-terminal section; belongs to the HPPK family. Mg(2+) is required as a cofactor.

It carries out the reaction 6-hydroxymethyl-7,8-dihydropterin + ATP = (7,8-dihydropterin-6-yl)methyl diphosphate + AMP + H(+). The enzyme catalyses (7,8-dihydropterin-6-yl)methyl diphosphate + 4-aminobenzoate = 7,8-dihydropteroate + diphosphate. The protein operates within cofactor biosynthesis; tetrahydrofolate biosynthesis; 2-amino-4-hydroxy-6-hydroxymethyl-7,8-dihydropteridine diphosphate from 7,8-dihydroneopterin triphosphate: step 4/4. Its pathway is cofactor biosynthesis; tetrahydrofolate biosynthesis; 7,8-dihydrofolate from 2-amino-4-hydroxy-6-hydroxymethyl-7,8-dihydropteridine diphosphate and 4-aminobenzoate: step 1/2. The chain is Folate synthesis bifunctional protein (folKP) from Chlamydia trachomatis serovar D (strain ATCC VR-885 / DSM 19411 / UW-3/Cx).